A 217-amino-acid chain; its full sequence is Uracil-DNA glycosylase (217 aa).

Asp-62 (proton acceptor) is an active-site residue.

The protein belongs to the uracil-DNA glycosylase (UDG) superfamily. UNG family.

The protein resides in the cytoplasm. It catalyses the reaction Hydrolyzes single-stranded DNA or mismatched double-stranded DNA and polynucleotides, releasing free uracil.. In terms of biological role, excises uracil residues from the DNA which can arise as a result of misincorporation of dUMP residues by DNA polymerase or due to deamination of cytosine. The protein is Uracil-DNA glycosylase of Streptococcus pneumoniae (strain Hungary19A-6).